We begin with the raw amino-acid sequence, 313 residues long: UPF0761 membrane protein VV0203 (313 aa).

A run of 6 helical transmembrane segments spans residues 41-61 (YLAY…LSIL), 104-124 (MTAV…SNID), 139-159 (AVFS…LVGA), 185-205 (LLRW…YLLV), 215-235 (AVVG…GFAA), and 249-269 (ALAA…IVLI). Residues 293 to 313 (LPNNDTELEKDTQRDRFDSES) form a disordered region. Residues 299 to 313 (ELEKDTQRDRFDSES) show a composition bias toward basic and acidic residues.

This sequence belongs to the UPF0761 family.

The protein resides in the cell inner membrane. The chain is UPF0761 membrane protein VV0203 from Vibrio vulnificus (strain YJ016).